Consider the following 106-residue polypeptide: L-rhamnose mutarotase (106 aa).

Y20 contributes to the substrate binding site. H24 (proton donor) is an active-site residue. Substrate is bound by residues Y43 and 78–79 (WW).

Belongs to the rhamnose mutarotase family. Homodimer.

The protein resides in the cytoplasm. The enzyme catalyses alpha-L-rhamnose = beta-L-rhamnose. Its pathway is carbohydrate metabolism; L-rhamnose metabolism. In terms of biological role, involved in the anomeric conversion of L-rhamnose. The protein is L-rhamnose mutarotase of Rhizobium etli (strain ATCC 51251 / DSM 11541 / JCM 21823 / NBRC 15573 / CFN 42).